A 571-amino-acid chain; its full sequence is Proline--tRNA ligase (571 aa).

The protein belongs to the class-II aminoacyl-tRNA synthetase family. ProS type 1 subfamily. Homodimer.

The protein resides in the cytoplasm. The catalysed reaction is tRNA(Pro) + L-proline + ATP = L-prolyl-tRNA(Pro) + AMP + diphosphate. Functionally, catalyzes the attachment of proline to tRNA(Pro) in a two-step reaction: proline is first activated by ATP to form Pro-AMP and then transferred to the acceptor end of tRNA(Pro). As ProRS can inadvertently accommodate and process non-cognate amino acids such as alanine and cysteine, to avoid such errors it has two additional distinct editing activities against alanine. One activity is designated as 'pretransfer' editing and involves the tRNA(Pro)-independent hydrolysis of activated Ala-AMP. The other activity is designated 'posttransfer' editing and involves deacylation of mischarged Ala-tRNA(Pro). The misacylated Cys-tRNA(Pro) is not edited by ProRS. The chain is Proline--tRNA ligase from Histophilus somni (strain 2336) (Haemophilus somnus).